The primary structure comprises 737 residues: Palmitoyltransferase akr1 (737 aa).

The span at 1 to 15 (MSSGNSSTGTHTNGN) shows a compositional bias: low complexity. The tract at residues 1-39 (MSSGNSSTGTHTNGNFATLGSSPPSAVGGKGRAIPPKVT) is disordered. Topologically, residues 1–313 (MSSGNSSTGT…WVRNKSLMSK (313 aa)) are cytoplasmic. ANK repeat units lie at residues 96–125 (EGIT…DVNA), 130–159 (SVAT…DPLL), 163–192 (QGYN…PVDV), 196–225 (QGHT…HANA), and 228–258 (EGGL…DKFA). 2 helical membrane passes run 314-334 (FFFL…SNMV) and 335-355 (VYAA…VAQK). Over 356–374 (AASQGPSEYRILQKTPYLS) the chain is Cytoplasmic. A helical transmembrane segment spans residues 375–395 (GVFAGSLFWVGFRYVFYVLPV). The Lumenal portion of the chain corresponds to 396–401 (TYSTSP). The chain crosses the membrane as a helical span at residues 402 to 422 (ILNGLFAIFFSLTTYFYIYSM). The Cytoplasmic portion of the chain corresponds to 423-498 (VEDPGFVPKL…DNCVGANNLR (76 aa)). The DHHC domain occupies 455-505 (NFCVSCMVRRPLRSKHCKRCARCVAKHDHHCPWIDNCVGANNLRHFVLYIT). Cysteine 485 (S-palmitoyl cysteine intermediate) is an active-site residue. A helical transmembrane segment spans residues 499 to 519 (HFVLYITCLEVGIVLFVQLTF). The Lumenal segment spans residues 520-548 (NYINSLPAPAQPQCNIINETLCDFVLRDT). Residues 549–569 (FTLVLDLWVCIQLVWITMLVA) form a helical membrane-spanning segment. Over 570–737 (VQMIQISRNQ…LSVEDPEQGV (168 aa)) the chain is Cytoplasmic.

Belongs to the DHHC palmitoyltransferase family. AKR/ZDHHC17 subfamily.

Its subcellular location is the early endosome membrane. It is found in the golgi apparatus membrane. The enzyme catalyses L-cysteinyl-[protein] + hexadecanoyl-CoA = S-hexadecanoyl-L-cysteinyl-[protein] + CoA. Palmitoyltransferase specific for casein kinase 1. This is Palmitoyltransferase akr1 (akr1) from Aspergillus oryzae (strain ATCC 42149 / RIB 40) (Yellow koji mold).